Reading from the N-terminus, the 430-residue chain is Adenylosuccinate synthetase (430 aa).

GTP is bound by residues Gly-12–Lys-18 and Gly-40–Thr-42. Residue Asp-13 is the Proton acceptor of the active site. Mg(2+)-binding residues include Asp-13 and Gly-40. IMP is bound by residues Asp-13–Lys-16, Asn-38–His-41, Thr-130, Arg-144, Gln-224, Thr-239, and Arg-303. His-41 serves as the catalytic Proton donor. Val-299 to Arg-305 contacts substrate. GTP contacts are provided by residues Arg-305, Lys-331 to Asp-333, and Ser-413 to Ser-415.

This sequence belongs to the adenylosuccinate synthetase family. Homodimer. Requires Mg(2+) as cofactor.

The protein resides in the cytoplasm. It carries out the reaction IMP + L-aspartate + GTP = N(6)-(1,2-dicarboxyethyl)-AMP + GDP + phosphate + 2 H(+). The protein operates within purine metabolism; AMP biosynthesis via de novo pathway; AMP from IMP: step 1/2. In terms of biological role, plays an important role in the de novo pathway of purine nucleotide biosynthesis. Catalyzes the first committed step in the biosynthesis of AMP from IMP. This Nitrobacter winogradskyi (strain ATCC 25391 / DSM 10237 / CIP 104748 / NCIMB 11846 / Nb-255) protein is Adenylosuccinate synthetase.